Here is a 126-residue protein sequence, read N- to C-terminus: MARLVGVDLPRDKRLEVALTYIYGIGRTRALETLAATGISPDLRVRDLTDDDLLKLREWIEANYRVEGDLRREVAADIRRKIEIGCYQGIRHRRGLPVRGQRTHTNARTRKGPRKTVAGKKKPGKK.

A disordered region spans residues 95 to 126; that stretch reads GLPVRGQRTHTNARTRKGPRKTVAGKKKPGKK.

It belongs to the universal ribosomal protein uS13 family. Part of the 30S ribosomal subunit. Forms a loose heterodimer with protein S19. Forms two bridges to the 50S subunit in the 70S ribosome.

Its function is as follows. Located at the top of the head of the 30S subunit, it contacts several helices of the 16S rRNA. In the 70S ribosome it contacts the 23S rRNA (bridge B1a) and protein L5 of the 50S subunit (bridge B1b), connecting the 2 subunits; these bridges are implicated in subunit movement. Contacts the tRNAs in the A and P-sites. In Acidothermus cellulolyticus (strain ATCC 43068 / DSM 8971 / 11B), this protein is Small ribosomal subunit protein uS13.